We begin with the raw amino-acid sequence, 569 residues long: Membrane protein insertase YidC (569 aa).

A helical membrane pass occupies residues 6 to 26 (FVLFLIFATSLLFLWDAWQKE). 2 stretches are compositionally biased toward polar residues: residues 32-52 (QGPK…TAGT) and 62-74 (LASS…STAE). A disordered region spans residues 32-81 (QGPKTAVQGTETQANTGTAGTAETPVPGDQLASSVPQRGSTAENGAPVRA). Transmembrane regions (helical) follow at residues 348-368 (VVDY…LSLF), 375-395 (WGVA…PLSA), 442-462 (GGCL…WVLL), 479-499 (LSAP…MFLQ), and 519-539 (PLAF…YSLV).

This sequence belongs to the OXA1/ALB3/YidC family. Type 1 subfamily. In terms of assembly, interacts with the Sec translocase complex via SecD. Specifically interacts with transmembrane segments of nascent integral membrane proteins during membrane integration.

The protein resides in the cell inner membrane. In terms of biological role, required for the insertion and/or proper folding and/or complex formation of integral membrane proteins into the membrane. Involved in integration of membrane proteins that insert both dependently and independently of the Sec translocase complex, as well as at least some lipoproteins. Aids folding of multispanning membrane proteins. In Nitrosospira multiformis (strain ATCC 25196 / NCIMB 11849 / C 71), this protein is Membrane protein insertase YidC.